We begin with the raw amino-acid sequence, 541 residues long: Tyrosine-protein kinase Yes (541 aa).

Glycine 2 carries N-myristoyl glycine lipidation. Cysteine 3 carries S-palmitoyl cysteine; in membrane form lipidation. A Phosphotyrosine modification is found at tyrosine 32. The SH3 domain occupies 89–150 (GGVTIFVALY…PSNYVVPADS (62 aa)). Residues 156-253 (WYFGKMGRKD…GLCHKLTTVC (98 aa)) enclose the SH2 domain. The Protein kinase domain occupies 275-528 (LRLEVKLGQG…YIQSFLEDYF (254 aa)). Residues 281–289 (LGQGCFGEV) and lysine 303 each bind ATP. Tyrosine 334 and tyrosine 343 each carry phosphotyrosine. Aspartate 394 functions as the Proton acceptor in the catalytic mechanism. Tyrosine 424 carries the phosphotyrosine; by autocatalysis modification. Tyrosine 535 is subject to Phosphotyrosine.

This sequence belongs to the protein kinase superfamily. Tyr protein kinase family. SRC subfamily. In terms of assembly, interacts with YAP1. Interacts with FASLG. Interacts with CTNND1; this interaction allows YES1-mediated activation of FYN and FER and subsequent phosphorylation of CTNND1. Interacts with CSF1R. Interacts with IL6ST/gp130. Interacts with SCRIB, when YES1 is in a closed conformation; the interaction facilitates YES1 autophosphorylation. Post-translationally, phosphorylated. Phosphorylation by CSK on the C-terminal tail maintains the enzyme in an inactive state. Autophosphorylation at Tyr-424 maintains enzyme activity by blocking CSK-mediated inhibition. Palmitoylation at Cys-3 promotes membrane localization.

It is found in the cell membrane. Its subcellular location is the cytoplasm. The protein resides in the cytoskeleton. The protein localises to the microtubule organizing center. It localises to the centrosome. It is found in the cytosol. Its subcellular location is the cell junction. The enzyme catalyses L-tyrosyl-[protein] + ATP = O-phospho-L-tyrosyl-[protein] + ADP + H(+). Non-receptor protein tyrosine kinase that is involved in the regulation of cell growth and survival, apoptosis, cell-cell adhesion, cytoskeleton remodeling, and differentiation. Stimulation by receptor tyrosine kinases (RTKs) including EGFR, PDGFR, CSF1R and FGFR leads to recruitment of YES1 to the phosphorylated receptor, and activation and phosphorylation of downstream substrates. Upon EGFR activation, promotes the phosphorylation of PARD3 to favor epithelial tight junction assembly. Participates in the phosphorylation of specific junctional components such as CTNND1 by stimulating the FYN and FER tyrosine kinases at cell-cell contacts. Upon T-cell stimulation by CXCL12, phosphorylates collapsin response mediator protein 2/DPYSL2 and induces T-cell migration. Participates in CD95L/FASLG signaling pathway and mediates AKT-mediated cell migration. Plays a role in cell cycle progression by phosphorylating the cyclin dependent kinase 4/CDK4 thus regulating the G1 phase. Also involved in G2/M progression and cytokinesis. Catalyzes phosphorylation of organic cation transporter OCT2 which induces its transport activity. The sequence is that of Tyrosine-protein kinase Yes (Yes1) from Mus musculus (Mouse).